A 356-amino-acid chain; its full sequence is Histidinol-phosphate aminotransferase (356 aa).

Residue Lys-214 is modified to N6-(pyridoxal phosphate)lysine.

The protein belongs to the class-II pyridoxal-phosphate-dependent aminotransferase family. Histidinol-phosphate aminotransferase subfamily. In terms of assembly, homodimer. Requires pyridoxal 5'-phosphate as cofactor.

It carries out the reaction L-histidinol phosphate + 2-oxoglutarate = 3-(imidazol-4-yl)-2-oxopropyl phosphate + L-glutamate. The protein operates within amino-acid biosynthesis; L-histidine biosynthesis; L-histidine from 5-phospho-alpha-D-ribose 1-diphosphate: step 7/9. The polypeptide is Histidinol-phosphate aminotransferase (Aromatoleum aromaticum (strain DSM 19018 / LMG 30748 / EbN1) (Azoarcus sp. (strain EbN1))).